Here is a 626-residue protein sequence, read N- to C-terminus: Hormonally up-regulated neu tumor-associated kinase homolog B (626 aa).

ATP is bound by residues 1–2 and Lys-17; that span reads KV. The region spanning 1–246 is the Protein kinase domain; sequence KVREGLHVGT…IQQALANRWL (246 aa). Catalysis depends on Asp-112, which acts as the Proton acceptor. Residues 336 to 357 are compositionally biased toward basic and acidic residues; sequence KYKMNKNSYEERRSKDLEKRGE. Disordered regions lie at residues 336–407, 477–574, and 590–615; these read KYKM…ESFG, VNRE…RSRG, and QVVS…PGYA. Residues 374-390 show a composition bias toward polar residues; it reads SHRQSTCLTPQGHSSSK. The segment covering 392–405 has biased composition (basic and acidic residues); sequence PIKERRSSKSERES. Residues 518-532 show a composition bias toward polar residues; sequence DNTSPLKGHSNQASF. A compositionally biased stretch (low complexity) spans 539 to 555; sequence SPSSPESMSPTSPHSPS. A compositionally biased stretch (polar residues) spans 556-566; the sequence is CNNNISGNLGS.

This sequence belongs to the protein kinase superfamily. CAMK Ser/Thr protein kinase family. SNF1 subfamily. In terms of tissue distribution, in the egg, expressed predominantly in the animal hemisphere. This pattern of expression persists throughout the cleavage and blastula stages. At the gastrula stage, expression is restricted to the ectoderm. In later-stage embryos, expressed over the entire embryonic surface including the open neural plate at stage 15 and the neural tube at stage 22. In tadpoles, strongly expressed in the neural tube, motor neurons, brain regions and sensory organs (otic vesicle and eye). Also expressed in the perisomitic mesoderm, brachial arches and embryonic epidermis of tadpoles.

It catalyses the reaction L-seryl-[protein] + ATP = O-phospho-L-seryl-[protein] + ADP + H(+). The catalysed reaction is L-threonyl-[protein] + ATP = O-phospho-L-threonyl-[protein] + ADP + H(+). This chain is Hormonally up-regulated neu tumor-associated kinase homolog B (hunk-b), found in Xenopus laevis (African clawed frog).